Here is a 408-residue protein sequence, read N- to C-terminus: CinA-like protein (408 aa).

The protein belongs to the CinA family.

This is CinA-like protein from Fervidobacterium nodosum (strain ATCC 35602 / DSM 5306 / Rt17-B1).